The sequence spans 564 residues: Proline--tRNA ligase (564 aa).

This sequence belongs to the class-II aminoacyl-tRNA synthetase family. ProS type 1 subfamily. In terms of assembly, homodimer.

It localises to the cytoplasm. It catalyses the reaction tRNA(Pro) + L-proline + ATP = L-prolyl-tRNA(Pro) + AMP + diphosphate. In terms of biological role, catalyzes the attachment of proline to tRNA(Pro) in a two-step reaction: proline is first activated by ATP to form Pro-AMP and then transferred to the acceptor end of tRNA(Pro). As ProRS can inadvertently accommodate and process non-cognate amino acids such as alanine and cysteine, to avoid such errors it has two additional distinct editing activities against alanine. One activity is designated as 'pretransfer' editing and involves the tRNA(Pro)-independent hydrolysis of activated Ala-AMP. The other activity is designated 'posttransfer' editing and involves deacylation of mischarged Ala-tRNA(Pro). The misacylated Cys-tRNA(Pro) is not edited by ProRS. The sequence is that of Proline--tRNA ligase from Thermosipho melanesiensis (strain DSM 12029 / CIP 104789 / BI429).